The primary structure comprises 218 residues: ATP phosphoribosyltransferase (218 aa).

This sequence belongs to the ATP phosphoribosyltransferase family. Short subfamily. In terms of assembly, heteromultimer composed of HisG and HisZ subunits.

It localises to the cytoplasm. It catalyses the reaction 1-(5-phospho-beta-D-ribosyl)-ATP + diphosphate = 5-phospho-alpha-D-ribose 1-diphosphate + ATP. It participates in amino-acid biosynthesis; L-histidine biosynthesis; L-histidine from 5-phospho-alpha-D-ribose 1-diphosphate: step 1/9. Functionally, catalyzes the condensation of ATP and 5-phosphoribose 1-diphosphate to form N'-(5'-phosphoribosyl)-ATP (PR-ATP). Has a crucial role in the pathway because the rate of histidine biosynthesis seems to be controlled primarily by regulation of HisG enzymatic activity. The sequence is that of ATP phosphoribosyltransferase from Acaryochloris marina (strain MBIC 11017).